The primary structure comprises 190 residues: Ribosome maturation factor RimP (190 aa).

Positions 159-190 (ELELAGGIPEGRVAPADADASEDEEVVEGLDK) are disordered. The segment covering 177–190 (DASEDEEVVEGLDK) has biased composition (acidic residues).

The protein belongs to the RimP family.

It localises to the cytoplasm. In terms of biological role, required for maturation of 30S ribosomal subunits. In Rhodococcus opacus (strain B4), this protein is Ribosome maturation factor RimP.